We begin with the raw amino-acid sequence, 206 residues long: Small ribosomal subunit protein uS4 (206 aa).

A compositionally biased stretch (basic and acidic residues) spans 1 to 16 (MTKRQESKYKIDRRMG). The interval 1 to 46 (MTKRQESKYKIDRRMGENIWGRPKSPVNRREYGPGQHGQRRKGKLS) is disordered. An S4 RNA-binding domain is found at 94 to 154 (RRLDAVVYRA…EKSKQLAIVL (61 aa)).

It belongs to the universal ribosomal protein uS4 family. As to quaternary structure, part of the 30S ribosomal subunit. Contacts protein S5. The interaction surface between S4 and S5 is involved in control of translational fidelity.

Functionally, one of the primary rRNA binding proteins, it binds directly to 16S rRNA where it nucleates assembly of the body of the 30S subunit. In terms of biological role, with S5 and S12 plays an important role in translational accuracy. The polypeptide is Small ribosomal subunit protein uS4 (Parvibaculum lavamentivorans (strain DS-1 / DSM 13023 / NCIMB 13966)).